A 184-amino-acid polypeptide reads, in one-letter code: UPF0398 protein BALH_1408 (184 aa).

Belongs to the UPF0398 family.

This is UPF0398 protein BALH_1408 from Bacillus thuringiensis (strain Al Hakam).